A 399-amino-acid chain; its full sequence is S-adenosylmethionine synthase (399 aa).

Residue H17 coordinates ATP. D19 serves as a coordination point for Mg(2+). E45 lines the K(+) pocket. Residues E58 and Q101 each coordinate L-methionine. The flexible loop stretch occupies residues 101–111 (QSPDIAQGVDE). Residues 177 to 179 (DAK), 244 to 245 (RF), D253, 259 to 260 (RK), A276, and K280 contribute to the ATP site. Residue D253 participates in L-methionine binding. K284 lines the L-methionine pocket.

Belongs to the AdoMet synthase family. In terms of assembly, homotetramer; dimer of dimers. It depends on Mg(2+) as a cofactor. K(+) serves as cofactor.

The protein localises to the cytoplasm. It catalyses the reaction L-methionine + ATP + H2O = S-adenosyl-L-methionine + phosphate + diphosphate. It participates in amino-acid biosynthesis; S-adenosyl-L-methionine biosynthesis; S-adenosyl-L-methionine from L-methionine: step 1/1. Its function is as follows. Catalyzes the formation of S-adenosylmethionine (AdoMet) from methionine and ATP. The overall synthetic reaction is composed of two sequential steps, AdoMet formation and the subsequent tripolyphosphate hydrolysis which occurs prior to release of AdoMet from the enzyme. The polypeptide is S-adenosylmethionine synthase (Listeria monocytogenes serotype 4b (strain CLIP80459)).